A 239-amino-acid chain; its full sequence is tRNA1(Val) (adenine(37)-N6)-methyltransferase (239 aa).

This sequence belongs to the methyltransferase superfamily. tRNA (adenine-N(6)-)-methyltransferase family.

It is found in the cytoplasm. The enzyme catalyses adenosine(37) in tRNA1(Val) + S-adenosyl-L-methionine = N(6)-methyladenosine(37) in tRNA1(Val) + S-adenosyl-L-homocysteine + H(+). Functionally, specifically methylates the adenine in position 37 of tRNA(1)(Val) (anticodon cmo5UAC). The polypeptide is tRNA1(Val) (adenine(37)-N6)-methyltransferase (Vibrio vulnificus (strain CMCP6)).